We begin with the raw amino-acid sequence, 126 residues long: Large ribosomal subunit protein bL12 (126 aa).

It belongs to the bacterial ribosomal protein bL12 family. Homodimer. Part of the ribosomal stalk of the 50S ribosomal subunit. Forms a multimeric L10(L12)X complex, where L10 forms an elongated spine to which 2 to 4 L12 dimers bind in a sequential fashion. Binds GTP-bound translation factors.

In terms of biological role, forms part of the ribosomal stalk which helps the ribosome interact with GTP-bound translation factors. Is thus essential for accurate translation. The polypeptide is Large ribosomal subunit protein bL12 (Saccharophagus degradans (strain 2-40 / ATCC 43961 / DSM 17024)).